The chain runs to 455 residues: Ribulose bisphosphate carboxylase large chain (455 aa).

Lysine 5 is subject to N6,N6,N6-trimethyllysine. Substrate is bound by residues asparagine 114 and threonine 164. The active-site Proton acceptor is lysine 166. Substrate is bound at residue lysine 168. Residues lysine 192, aspartate 194, and glutamate 195 each coordinate Mg(2+). Lysine 192 carries the post-translational modification N6-carboxylysine. Histidine 285 (proton acceptor) is an active-site residue. Substrate-binding residues include arginine 286, histidine 318, and serine 370.

Belongs to the RuBisCO large chain family. Type I subfamily. In terms of assembly, heterohexadecamer of 8 large chains and 8 small chains; disulfide-linked. The disulfide link is formed within the large subunit homodimers. Requires Mg(2+) as cofactor. Post-translationally, the disulfide bond which can form in the large chain dimeric partners within the hexadecamer appears to be associated with oxidative stress and protein turnover.

The protein localises to the plastid. Its subcellular location is the chloroplast. The catalysed reaction is 2 (2R)-3-phosphoglycerate + 2 H(+) = D-ribulose 1,5-bisphosphate + CO2 + H2O. The enzyme catalyses D-ribulose 1,5-bisphosphate + O2 = 2-phosphoglycolate + (2R)-3-phosphoglycerate + 2 H(+). Functionally, ruBisCO catalyzes two reactions: the carboxylation of D-ribulose 1,5-bisphosphate, the primary event in carbon dioxide fixation, as well as the oxidative fragmentation of the pentose substrate in the photorespiration process. Both reactions occur simultaneously and in competition at the same active site. This Lupinus cosentinii (West Australian blue lupine) protein is Ribulose bisphosphate carboxylase large chain.